The sequence spans 229 residues: Large ribosomal subunit protein uL1 (229 aa).

Belongs to the universal ribosomal protein uL1 family. In terms of assembly, part of the 50S ribosomal subunit.

In terms of biological role, binds directly to 23S rRNA. The L1 stalk is quite mobile in the ribosome, and is involved in E site tRNA release. Its function is as follows. Protein L1 is also a translational repressor protein, it controls the translation of the L11 operon by binding to its mRNA. This Actinobacillus pleuropneumoniae serotype 5b (strain L20) protein is Large ribosomal subunit protein uL1.